Reading from the N-terminus, the 581-residue chain is La-related protein 7 (581 aa).

At Met-1 the chain carries N-acetylmethionine. Residues 1–10 (METESGNQKN) show a composition bias toward polar residues. Disordered regions lie at residues 1–28 (METE…KKKR), 188–368 (NPPE…ERHK), and 410–440 (KSES…CPTQ). Positions 28–122 (RSRVKQVLAD…KPLGERPKDE (95 aa)) constitute an HTH La-type RNA-binding domain. The RRM domain maps to 125–203 (RTVYVELLPK…PRKPGIFPKT (79 aa)). The span at 219-228 (KKKKKKKGRM) shows a compositional bias: basic residues. A compositionally biased stretch (basic and acidic residues) spans 229 to 240 (KKEDNVQAKEEN). Lys-237 is covalently cross-linked (Glycyl lysine isopeptide (Lys-Gly) (interchain with G-Cter in SUMO2)). Thr-257 carries the phosphothreonine modification. A phosphoserine mark is found at Ser-258, Ser-261, Ser-273, Ser-298, Ser-299, and Ser-300. Residues 316–335 (IQKDIIKEPSEASKENRDIE) show a composition bias toward basic and acidic residues. Position 337 is a phosphoserine (Ser-337). At Thr-338 the chain carries Phosphothreonine. At Ser-351 the chain carries Phosphoserine. Over residues 354 to 367 (KTKRKHKKKHKERH) the composition is skewed to basic residues. Lys-410 participates in a covalent cross-link: Glycyl lysine isopeptide (Lys-Gly) (interchain with G-Cter in SUMO2). Residues 449 to 562 (QFVSGVIVKI…TEKLITKAEK (114 aa)) form the xRRM domain.

This sequence belongs to the LARP7 family. In terms of assembly, core component of the 7SK RNP complex, at least composed of 7SK RNA, LARP7, MEPCE, HEXIM1 (or HEXIM2) and P-TEFb (composed of CDK9 and CCNT1/cyclin-T1). Interacts with METTL16. Interacts with RBM7; upon genotoxic stress this interaction is enhanced, triggering the release of inactive P-TEFb complex from the core, yielding to P-TEFb complex activation. Associates with box C/D small nucleolar ribonucleoprotein (snoRNP) complexes.

It localises to the nucleus. It is found in the nucleoplasm. RNA-binding protein that specifically binds distinct small nuclear RNA (snRNAs) and regulates their processing and function. Specifically binds the 7SK snRNA (7SK RNA) and acts as a core component of the 7SK ribonucleoprotein (RNP) complex, thereby acting as a negative regulator of transcription elongation by RNA polymerase II. The 7SK RNP complex sequesters the positive transcription elongation factor b (P-TEFb) in a large inactive 7SK RNP complex preventing RNA polymerase II phosphorylation and subsequent transcriptional elongation. The 7SK RNP complex also promotes snRNA gene transcription by RNA polymerase II via interaction with the little elongation complex (LEC). LARP7 specifically binds to the highly conserved 3'-terminal U-rich stretch of 7SK RNA; on stimulation, remains associated with 7SK RNA, whereas P-TEFb is released from the complex. LARP7 also acts as a regulator of mRNA splicing fidelity by promoting U6 snRNA processing. Specifically binds U6 snRNAs and associates with a subset of box C/D RNP complexes: promotes U6 snRNA 2'-O-methylation by facilitating U6 snRNA loading into box C/D RNP complexes. U6 snRNA 2'-O-methylation is required for mRNA splicing fidelity. Binds U6 snRNAs with a 5'-CAGGG-3' sequence motif. U6 snRNA processing is required for spermatogenesis. This is La-related protein 7 from Macaca fascicularis (Crab-eating macaque).